A 519-amino-acid polypeptide reads, in one-letter code: O-fucosyltransferase 31 (519 aa).

A helical; Signal-anchor for type II membrane protein transmembrane segment spans residues 18–38 (ALAGVFVLLFPILYPNLFSPL). Residue Asn-131 is glycosylated (N-linked (GlcNAc...) asparagine). A substrate-binding site is contributed by 302–304 (HLR). N-linked (GlcNAc...) asparagine glycans are attached at residues Asn-373 and Asn-474.

It belongs to the glycosyltransferase GT106 family.

The protein localises to the membrane. Its pathway is glycan metabolism. In Arabidopsis thaliana (Mouse-ear cress), this protein is O-fucosyltransferase 31.